A 198-amino-acid polypeptide reads, in one-letter code: LexA repressor (198 aa).

Residues 28-47 constitute a DNA-binding region (H-T-H motif); sequence IRDIAKHFKLTPRGAHIHVL. Residues Ser-120 and Lys-157 each act as for autocatalytic cleavage activity in the active site.

It belongs to the peptidase S24 family. As to quaternary structure, homodimer.

The enzyme catalyses Hydrolysis of Ala-|-Gly bond in repressor LexA.. Functionally, represses a number of genes involved in the response to DNA damage (SOS response), including recA and lexA. In the presence of single-stranded DNA, RecA interacts with LexA causing an autocatalytic cleavage which disrupts the DNA-binding part of LexA, leading to derepression of the SOS regulon and eventually DNA repair. The chain is LexA repressor from Thermosipho africanus (strain TCF52B).